Consider the following 357-residue polypeptide: UDP-N-acetylglucosamine--N-acetylmuramyl-(pentapeptide) pyrophosphoryl-undecaprenol N-acetylglucosamine transferase (357 aa).

UDP-N-acetyl-alpha-D-glucosamine contacts are provided by residues 12 to 14 (TGG), Asn-124, Arg-162, Ser-190, Ile-244, 263 to 268 (ALTVAE), and Gln-289.

It belongs to the glycosyltransferase 28 family. MurG subfamily.

It localises to the cell inner membrane. It carries out the reaction di-trans,octa-cis-undecaprenyl diphospho-N-acetyl-alpha-D-muramoyl-L-alanyl-D-glutamyl-meso-2,6-diaminopimeloyl-D-alanyl-D-alanine + UDP-N-acetyl-alpha-D-glucosamine = di-trans,octa-cis-undecaprenyl diphospho-[N-acetyl-alpha-D-glucosaminyl-(1-&gt;4)]-N-acetyl-alpha-D-muramoyl-L-alanyl-D-glutamyl-meso-2,6-diaminopimeloyl-D-alanyl-D-alanine + UDP + H(+). It functions in the pathway cell wall biogenesis; peptidoglycan biosynthesis. Functionally, cell wall formation. Catalyzes the transfer of a GlcNAc subunit on undecaprenyl-pyrophosphoryl-MurNAc-pentapeptide (lipid intermediate I) to form undecaprenyl-pyrophosphoryl-MurNAc-(pentapeptide)GlcNAc (lipid intermediate II). The protein is UDP-N-acetylglucosamine--N-acetylmuramyl-(pentapeptide) pyrophosphoryl-undecaprenol N-acetylglucosamine transferase of Alkalilimnicola ehrlichii (strain ATCC BAA-1101 / DSM 17681 / MLHE-1).